A 93-amino-acid polypeptide reads, in one-letter code: Defensin-like protein 210 (93 aa).

The first 19 residues, 1–19, serve as a signal peptide directing secretion; the sequence is MKTIILFLTLLVISSSCTS. 3 cysteine pairs are disulfide-bonded: Cys63–Cys80, Cys66–Cys85, and Cys70–Cys87.

This sequence belongs to the DEFL family.

Its subcellular location is the secreted. In Arabidopsis thaliana (Mouse-ear cress), this protein is Defensin-like protein 210.